Here is a 182-residue protein sequence, read N- to C-terminus: Probable RNA 2'-phosphotransferase (182 aa).

This sequence belongs to the KptA/TPT1 family.

Removes the 2'-phosphate from RNA via an intermediate in which the phosphate is ADP-ribosylated by NAD followed by a presumed transesterification to release the RNA and generate ADP-ribose 1''-2''-cyclic phosphate (APPR&gt;P). May function as an ADP-ribosylase. The sequence is that of Probable RNA 2'-phosphotransferase from Pseudomonas fluorescens (strain ATCC BAA-477 / NRRL B-23932 / Pf-5).